A 260-amino-acid chain; its full sequence is G patch domain-containing protein 11 (260 aa).

The stretch at 25 to 61 (MLRQIREARRKEEKRQEANLKNRQKSIKEEEQERRDM) forms a coiled coil. A disordered region spans residues 33-60 (RRKEEKRQEANLKNRQKSIKEEEQERRD). Residues 69–115 (CENKGFALLQKMGYKSGQALGKSGDGIVEPIPLNVKTGKSGIGHETL) form the G-patch domain. The residue at position 123 (Lys123) is an N6-acetyllysine. The tract at residues 187-212 (WLRPEEETEEETEEEKEQDEDEYKSE) is disordered. Positions 192–210 (EETEEETEEEKEQDEDEYK) are enriched in acidic residues.

The protein belongs to the GPATCH11 family.

The protein resides in the chromosome. Its subcellular location is the centromere. It localises to the kinetochore. The protein is G patch domain-containing protein 11 (GPATCH11) of Bos taurus (Bovine).